A 479-amino-acid chain; its full sequence is Solute carrier family 46 member 2 (479 aa).

Topologically, residues 1 to 23 (MGPGGTCPWSSRLSGFRVRTWIE) are cytoplasmic. The helical transmembrane segment at 24–44 (PVVASTQVAGSLYDAGLLLVV) threads the bilayer. The Extracellular segment spans residues 45-80 (KESFKSEAGGSSNYSANQSLVEYQEDQQQKAISNFN). N-linked (GlcNAc...) asparagine glycans are attached at residues N57 and N61. A helical membrane pass occupies residues 81–101 (IIYNLVLGLTPLLSAYGLGWL). At 102–110 (SDRYHRKIS) the chain is on the cytoplasmic side. Residues 111–131 (ICTAMLGFLLSRIGLLLKVML) form a helical membrane-spanning segment. The Extracellular segment spans residues 132 to 140 (DWPVEVMYG). A helical membrane pass occupies residues 141–161 (AAALNGLCGSFSAYWSGVMAL). The Cytoplasmic portion of the chain corresponds to 162 to 174 (GSLGCSEGRRSVR). A helical transmembrane segment spans residues 175–195 (LILIDLVLGLAGFSGSMASGH). Residues 196–207 (LFKQIVGHSAQG) lie on the Extracellular side of the membrane. The chain crosses the membrane as a helical span at residues 208-228 (LLLTACSVGCAAFALFYSLFV). Residues 229-281 (LKVPESKPNKVHPTVDTVSGMMGTYRTLDPDQQDKQNVPRNPRTPGKGKSSQR) are Cytoplasmic-facing. The segment at 255-277 (TLDPDQQDKQNVPRNPRTPGKGK) is disordered. A helical transmembrane segment spans residues 282–302 (EVVALLFVGAIIYDLAAVGTV). Residues 303 to 321 (DVMALFVLKEPLHWNQVQL) lie on the Extracellular side of the membrane. The chain crosses the membrane as a helical span at residues 322 to 342 (GYGMASGYIIFITSFLGVLVF). Over 343 to 348 (SRCFRD) the chain is Cytoplasmic. A helical transmembrane segment spans residues 349-369 (TTMIIIGMLSFGSGALLLAFV). Residues 370 to 371 (KE) lie on the Extracellular side of the membrane. A helical transmembrane segment spans residues 372–392 (TYMFYIARAIMLFALIPITTI). Topologically, residues 393–407 (RSAMSKLIKDSSYGK) are cytoplasmic. A helical membrane pass occupies residues 408 to 428 (IFVILQLCLTLTGVVTSTIYN). Residues 429–441 (KIYQLTLDKFIGT) are Extracellular-facing. A helical membrane pass occupies residues 442–462 (CFVLSSFLSFLAIVPIGVVAY). Topologically, residues 463 to 479 (KQVPRSQQGECAEKQRS) are cytoplasmic.

The protein belongs to the major facilitator superfamily. SLC46A family. In terms of processing, glycosylated. Expressed on cortical epithelial cells in the thymus. Mainly expressed in the thymic cortex and is highly enriched in SCID thymus. Also expressed in lymph nodes, heart, fetal liver, brain, spleen, intestine and kidney, but not in adult liver, skin, skeletal muscle and lung. Expressed in skin epidermis.

The protein localises to the endosome membrane. The protein resides in the cell membrane. The catalysed reaction is N-acetyl-beta-D-glucosaminyl-(1-&gt;4)-1,6-anhydro-N-acetyl-beta-D-muramoyl-L-alanyl-gamma-D-glutamyl-meso-2,6-diaminopimeloyl-D-alanine(out) + n H(+)(out) = N-acetyl-beta-D-glucosaminyl-(1-&gt;4)-1,6-anhydro-N-acetyl-beta-D-muramoyl-L-alanyl-gamma-D-glutamyl-meso-2,6-diaminopimeloyl-D-alanine(in) + n H(+)(in). It carries out the reaction L-alanyl-gamma-D-glutamyl-meso-2,6-diaminopimelate(out) + n H(+)(out) = L-alanyl-gamma-D-glutamyl-meso-2,6-diaminopimelate(in) + n H(+)(in). It catalyses the reaction N-acetyl-D-muramoyl-L-alanyl-D-isoglutamine(out) + n H(+)(out) = N-acetyl-D-muramoyl-L-alanyl-D-isoglutamine(in) + n H(+)(in). The enzyme catalyses 2',3'-cGAMP(out) + n H(+)(out) = 2',3'-cGAMP(in) + n H(+)(in). The catalysed reaction is 3',3'-cGAMP(out) + n H(+)(out) = 3',3'-cGAMP(in) + n H(+)(in). Its activity is regulated as follows. Down-regulated by the anti-inflammatory drug methotrexate. Proton-coupled transporter that delivers pathogen-associated or danger-associated molecular patterns to cytosolic pattern recognition receptors as part of the innate immune response to microbes or tissue injury. Has selectivity toward muropeptides that contain the amino acid diaminopimelic acid (DAP-type peptidoglycan muropeptides) including Tri-DAP and tracheal toxin (TCT), common in Gram-negative bacteria and Gram-positive bacilli. In the context of immune recognition of skin microbiota, shuttles bacterial muropeptides across the endolysosomal membranes into the cytosol for recognition by NOD1, triggering MYD88-dependent secretion of IL1A and neutrophil recruitment in a pyroptosis-type inflammatory process. To a lesser extent and redundantly, transports muramyl dipeptides derived from most bacterial proteoglycans, eliciting NOD2 receptor activation and downstream inflammatory responses. Postulated to function as an importer of cyclic GMP-AMP dinucleotides (cGAMPs) in monocyte and macrophage cell lineages. Selectively imports cGAMPs derived from pathogenic bacteria such as 3'3'-cGAMP thus providing for differential immune recognition of pathogenic versus commensal bacteria. During tumorigenesis may transport extracellular tumor-derived 2'3'-cGAMP across the plasma membrane of M1-polarized macrophages to activate the anti-tumoral stimulator of interferon genes (STING) pathway. The transport mechanism, its electrogenicity and stoichiometry remain to be elucidated. The protein is Solute carrier family 46 member 2 of Mus musculus (Mouse).